A 343-amino-acid chain; its full sequence is Heat-inducible transcription repressor HrcA (343 aa).

This sequence belongs to the HrcA family.

Negative regulator of class I heat shock genes (grpE-dnaK-dnaJ and groELS operons). Prevents heat-shock induction of these operons. In Phytoplasma mali (strain AT), this protein is Heat-inducible transcription repressor HrcA.